Consider the following 523-residue polypeptide: GMP synthase [glutamine-hydrolyzing] (523 aa).

Positions 9–198 (PVLVVDYGAQ…LTEIAGLEQN (190 aa)) constitute a Glutamine amidotransferase type-1 domain. Catalysis depends on cysteine 86, which acts as the Nucleophile. Active-site residues include histidine 172 and glutamate 174. The GMPS ATP-PPase domain maps to 199-397 (WTAANIAEEL…LGLPEVIVAR (199 aa)). 227–233 (SGGVDSA) lines the ATP pocket.

Homodimer.

The catalysed reaction is XMP + L-glutamine + ATP + H2O = GMP + L-glutamate + AMP + diphosphate + 2 H(+). The protein operates within purine metabolism; GMP biosynthesis; GMP from XMP (L-Gln route): step 1/1. Functionally, catalyzes the synthesis of GMP from XMP. This is GMP synthase [glutamine-hydrolyzing] from Corynebacterium efficiens (strain DSM 44549 / YS-314 / AJ 12310 / JCM 11189 / NBRC 100395).